Here is a 177-residue protein sequence, read N- to C-terminus: Small ribosomal subunit protein uS5 (177 aa).

In terms of domain architecture, S5 DRBM spans 14 to 77 (LQEKLITVNR…EKARHNMIDI (64 aa)).

Belongs to the universal ribosomal protein uS5 family. Part of the 30S ribosomal subunit. Contacts proteins S4 and S8.

Functionally, with S4 and S12 plays an important role in translational accuracy. In terms of biological role, located at the back of the 30S subunit body where it stabilizes the conformation of the head with respect to the body. In Blochmanniella floridana, this protein is Small ribosomal subunit protein uS5.